Here is a 371-residue protein sequence, read N- to C-terminus: tRNA-specific 2-thiouridylase MnmA (371 aa).

Residues 22–29 and Met48 contribute to the ATP site; that span reads GLSGGVDS. The interaction with target base in tRNA stretch occupies residues 108–110; sequence NPD. The active-site Nucleophile is Cys113. Cys113 and Cys209 are disulfide-bonded. An ATP-binding site is contributed by Gly137. The interaction with tRNA stretch occupies residues 159–161; it reads KDQ. Catalysis depends on Cys209, which acts as the Cysteine persulfide intermediate.

Belongs to the MnmA/TRMU family.

The protein localises to the cytoplasm. It catalyses the reaction S-sulfanyl-L-cysteinyl-[protein] + uridine(34) in tRNA + AH2 + ATP = 2-thiouridine(34) in tRNA + L-cysteinyl-[protein] + A + AMP + diphosphate + H(+). Its function is as follows. Catalyzes the 2-thiolation of uridine at the wobble position (U34) of tRNA, leading to the formation of s(2)U34. This is tRNA-specific 2-thiouridylase MnmA from Coxiella burnetii (strain CbuG_Q212) (Coxiella burnetii (strain Q212)).